We begin with the raw amino-acid sequence, 81 residues long: Short neurotoxin 1 (81 aa).

The first 21 residues, 1–21 (MKTLLLTLVVVTIVFLDLGYT), serve as a signal peptide directing secretion. Cystine bridges form between C24–C43, C38–C60, C62–C73, and C74–C79.

Belongs to the three-finger toxin family. Short-chain subfamily. Type I alpha-neurotoxin sub-subfamily. Expressed by the venom gland.

It is found in the secreted. Functionally, binds to muscle nicotinic acetylcholine receptor (nAChR) and inhibit acetylcholine from binding to the receptor, thereby impairing neuromuscular transmission. This chain is Short neurotoxin 1, found in Notechis scutatus scutatus (Mainland tiger snake).